We begin with the raw amino-acid sequence, 417 residues long: Glucose-1-phosphate adenylyltransferase (417 aa).

Alpha-D-glucose 1-phosphate contacts are provided by residues Tyr-98, Gly-163, 178–179 (EK), and Ser-197.

The protein belongs to the bacterial/plant glucose-1-phosphate adenylyltransferase family. In terms of assembly, homotetramer.

The enzyme catalyses alpha-D-glucose 1-phosphate + ATP + H(+) = ADP-alpha-D-glucose + diphosphate. Its pathway is glycan biosynthesis; glycogen biosynthesis. Its function is as follows. Involved in the biosynthesis of ADP-glucose, a building block required for the elongation reactions to produce glycogen. Catalyzes the reaction between ATP and alpha-D-glucose 1-phosphate (G1P) to produce pyrophosphate and ADP-Glc. This Koribacter versatilis (strain Ellin345) protein is Glucose-1-phosphate adenylyltransferase.